The following is a 510-amino-acid chain: Solute carrier family 2, facilitated glucose transporter member 2 (510 aa).

At 1-10 (MTEDKVTGTL) the chain is on the cytoplasmic side. The helical transmembrane segment at 11–31 (VLAVFTAVLSSFQFGYDIGVI) threads the bilayer. At 32 to 96 (NAPQQVIITH…SASLITMFWS (65 aa)) the chain is on the extracellular side. The N-linked (GlcNAc...) asparagine glycan is linked to Asn-62. A helical transmembrane segment spans residues 97-117 (LSVSSFAVGGMIASFFGGLLG). At 118 to 122 (DKLGR) the chain is on the cytoplasmic side. The chain crosses the membrane as a helical span at residues 123-143 (IKALLVANILSLVGALLMGFS). The Extracellular portion of the chain corresponds to 144–157 (KLGPSHILIISGRG). The helical transmembrane segment at 158-178 (ISGLYCGLISGLIPMYIGEIA) threads the bilayer. The Cytoplasmic segment spans residues 179–191 (PTTLRGAIGALHQ). Gln-191 provides a ligand contact to D-glucose. Residues 192 to 212 (LAIVTGILISQIVGLDFILGN) traverse the membrane as a helical segment. Topologically, residues 213–215 (HEL) are extracellular. Residues 216–236 (WHILLGLSAVPAILQCLLLFF) traverse the membrane as a helical segment. The Cytoplasmic portion of the chain corresponds to 237–301 (CPESPRYLYI…LFTNASYRQP (65 aa)). A helical membrane pass occupies residues 302 to 322 (ILVALMLHAAQQFSGINGIFY). Residues 312-313 (QQ) and Asn-318 contribute to the D-glucose site. Over 323-336 (YSTSIFQTAGISQP) the chain is Extracellular. Residues 337–357 (VYATIGVGAVNTVFTAVSVFL) form a helical membrane-spanning segment. Asn-347 contributes to the D-glucose binding site. The Cytoplasmic portion of the chain corresponds to 358-365 (VEKAGRRS). A helical transmembrane segment spans residues 366-386 (LFLIGMSGMFVCAIFMSVGLV). Residues 387–400 (LLSKFPWMNYVSMT) are Extracellular-facing. Residues 401–421 (AIFLFVSFFEIGPGPIPWFMV) traverse the membrane as a helical segment. Residues Glu-410 and Trp-418 each coordinate D-glucose. The Cytoplasmic portion of the chain corresponds to 422-431 (AEFFSQGPRP). A helical transmembrane segment spans residues 432–452 (AALAIAAFSNWTGNFIIALCF). Residues 453–454 (QY) lie on the Extracellular side of the membrane. Residues 455–475 (IADFCGPYVFFLLLVWSWPLF) form a helical membrane-spanning segment. Residues 476–510 (CSHFLKFQKPKENPLRKSQQSSERRGVQLKRQKLL) are Cytoplasmic-facing. A disordered region spans residues 490-510 (LRKSQQSSERRGVQLKRQKLL).

The protein belongs to the major facilitator superfamily. Sugar transporter (TC 2.A.1.1) family. Glucose transporter subfamily. In terms of processing, N-glycosylated; required for stability and retention at the cell surface of pancreatic beta cells.

It is found in the cell membrane. The enzyme catalyses D-glucose(out) = D-glucose(in). The catalysed reaction is D-fructose(out) = D-fructose(in). It catalyses the reaction L-dehydroascorbate(out) = L-dehydroascorbate(in). It carries out the reaction D-galactose(in) = D-galactose(out). With respect to regulation, D-glucose and maltose competitively inhibit fructose transport. D-glucose, D-fructose and maltose inhibit deoxyglucose transport. Facilitative hexose transporter that mediates the transport of glucose, fructose and galactose. Likely mediates the bidirectional transfer of glucose across the plasma membrane of hepatocytes and is responsible for uptake of glucose by the beta cells; may comprise part of the glucose-sensing mechanism of the beta cell. May also participate with the Na(+)/glucose cotransporter in the transcellular transport of glucose in the small intestine and kidney. Also able to mediate the transport of dehydroascorbate. This chain is Solute carrier family 2, facilitated glucose transporter member 2, found in Bos taurus (Bovine).